A 432-amino-acid chain; its full sequence is Short/branched chain specific acyl-CoA dehydrogenase, mitochondrial (432 aa).

A mitochondrion-targeting transit peptide spans 1 to 33; it reads MEGLAVRLLRGSRLLRRNFPTCLSSWKIPPHVS. N6-acetyllysine; alternate is present on lysine 70. Lysine 70 carries the N6-succinyllysine; alternate modification. Residues 174–183 and 207–209 contribute to the FAD site; these read FCLSEAGAGS and WIS. Serine 183 lines the substrate pocket. A Phosphoserine modification is found at serine 183. The substrate site is built by tyrosine 229 and tyrosine 283. Residue lysine 284 is modified to N6-acetyllysine; alternate. The residue at position 284 (lysine 284) is an N6-succinyllysine; alternate. A substrate-binding site is contributed by 291 to 294; it reads NEGR. Residues arginine 319, glutamine 330, and 387 to 391 each bind FAD; that span reads EWMGG. Residue glutamate 414 is the Proton acceptor of the active site. Residue 416–418 coordinates FAD; that stretch reads ASN. Lysine 426 bears the N6-acetyllysine mark.

This sequence belongs to the acyl-CoA dehydrogenase family. In terms of assembly, homotetramer. The cofactor is FAD.

The protein resides in the mitochondrion matrix. It carries out the reaction 2-methylbutanoyl-CoA + oxidized [electron-transfer flavoprotein] + H(+) = (2E)-2-methylbut-2-enoyl-CoA + reduced [electron-transfer flavoprotein]. The enzyme catalyses (2S)-2-methylbutanoyl-CoA + oxidized [electron-transfer flavoprotein] + H(+) = (2E)-2-methylbut-2-enoyl-CoA + reduced [electron-transfer flavoprotein]. It catalyses the reaction (2R)-2-methylbutanoyl-CoA + oxidized [electron-transfer flavoprotein] + H(+) = ethylacryloyl-CoA + reduced [electron-transfer flavoprotein]. The catalysed reaction is butanoyl-CoA + oxidized [electron-transfer flavoprotein] + H(+) = (2E)-butenoyl-CoA + reduced [electron-transfer flavoprotein]. It carries out the reaction 2-methylpropanoyl-CoA + oxidized [electron-transfer flavoprotein] + H(+) = 2-methylpropenoyl-CoA + reduced [electron-transfer flavoprotein]. The enzyme catalyses hexanoyl-CoA + oxidized [electron-transfer flavoprotein] + H(+) = (2E)-hexenoyl-CoA + reduced [electron-transfer flavoprotein]. It catalyses the reaction valproyl-CoA + oxidized [electron-transfer flavoprotein] + H(+) = (2E)-2-propylpent-2-enoyl-CoA + reduced [electron-transfer flavoprotein]. It functions in the pathway lipid metabolism; mitochondrial fatty acid beta-oxidation. The protein operates within amino-acid degradation; L-isoleucine degradation. Short and branched chain specific acyl-CoA dehydrogenase that catalyzes the removal of one hydrogen from C-2 and C-3 of the fatty acyl-CoA thioester, resulting in the formation of trans-2-enoyl-CoA. Among the different mitochondrial acyl-CoA dehydrogenases, acts specifically on short and branched chain acyl-CoA derivatives such as (S)-2-methylbutyryl-CoA as well as short straight chain acyl-CoAs such as butyryl-CoA. Plays an important role in the metabolism of L-isoleucine by catalyzing the dehydrogenation of 2-methylbutyryl-CoA, one of the steps of the L-isoleucine catabolic pathway. Can also act on valproyl-CoA, a metabolite of the valproic acid drug. In Pongo abelii (Sumatran orangutan), this protein is Short/branched chain specific acyl-CoA dehydrogenase, mitochondrial (ACADSB).